The chain runs to 156 residues: Small ribosomal subunit protein uS7 (156 aa).

The protein belongs to the universal ribosomal protein uS7 family. Part of the 30S ribosomal subunit. Contacts proteins S9 and S11.

One of the primary rRNA binding proteins, it binds directly to 16S rRNA where it nucleates assembly of the head domain of the 30S subunit. Is located at the subunit interface close to the decoding center, probably blocks exit of the E-site tRNA. In Salmonella choleraesuis (strain SC-B67), this protein is Small ribosomal subunit protein uS7.